A 327-amino-acid polypeptide reads, in one-letter code: Polyprenyl transferase andD (327 aa).

The next 8 helical transmembrane spans lie at 49–69, 81–101, 140–160, 174–194, 201–221, 244–264, 271–291, and 307–327; these read LGYI…ASIA, ITLL…WDDI, FAFV…MLFF, PQLI…GLNL, IPMA…DIIY, CLDA…VIAG, APFF…LAMA, and CCTS…VWRS.

It belongs to the UbiA prenyltransferase family. Requires Mg(2+) as cofactor.

Its subcellular location is the membrane. It participates in secondary metabolite biosynthesis; terpenoid biosynthesis. Functionally, polyprenyl transferase; part of the gene cluster that mediates the biosynthesis of anditomin, a fungal meroterpenoid. The first step of the pathway is the synthesis of 3,5-dimethylorsellinic acid (DMOA) by the polyketide synthase andM. DMOA is then converted to the phthalide compound 5,7-dihydroxy-4,6-dimethylphthalide (DHDMP) by the cytochrome P450 monooxygenase andK, which is further prenylated by the prenyltransferase andD to yield farnesyl-DHDMP. Further epoxidation by the FAD-dependent monooxygenase andE leads to epoxyfarnesyl-DHDMP. The next step involves the terpene cyclase andB that converts epoxyfarnesyl-DHDMP into preandiloid A through opening of the epoxide ring followed by the cyclization of the farnesyl moiety. Preandiloid A is in turn oxidized at the C-3 hydroxyl group to yield preandiloid B by the dehydrogenase andC. The dioxygenase andA is solely responsible for the dehydrogenation of preandiloid B leading to the enone preandiloid C, as well as for the intriguing structural rearrangement to generate the bicyclo[2.2.2]octane core, transforming preandiloid C into andiconin. FAD-binding monooxygenase andJ then produces andilesin D which is reduced by dehydrogenase andI to yield andilesin A. Action of acetyltransferase andG followed by a spontaneous acetate elimination leads then to andilesin B, which is in turn substrate of the short chain dehydrogenase andH to yield andilesin C. Finally, the dioxygenase andF catalyzes the transformation of andilesin C to anditomin. The polypeptide is Polyprenyl transferase andD (Emericella variicolor (Aspergillus stellatus)).